A 196-amino-acid polypeptide reads, in one-letter code: Protein GrpE (196 aa).

The disordered stretch occupies residues 1–39 (MSSKEQKTPEGQAPEEIIMDQHEEIEAVEPEASAEQVDP).

The protein belongs to the GrpE family. As to quaternary structure, homodimer.

It is found in the cytoplasm. Participates actively in the response to hyperosmotic and heat shock by preventing the aggregation of stress-denatured proteins, in association with DnaK and GrpE. It is the nucleotide exchange factor for DnaK and may function as a thermosensor. Unfolded proteins bind initially to DnaJ; upon interaction with the DnaJ-bound protein, DnaK hydrolyzes its bound ATP, resulting in the formation of a stable complex. GrpE releases ADP from DnaK; ATP binding to DnaK triggers the release of the substrate protein, thus completing the reaction cycle. Several rounds of ATP-dependent interactions between DnaJ, DnaK and GrpE are required for fully efficient folding. The polypeptide is Protein GrpE (Escherichia coli (strain SMS-3-5 / SECEC)).